Reading from the N-terminus, the 575-residue chain is Thrombomodulin (575 aa).

A signal peptide spans methionine 1–proline 18. The Extracellular segment spans residues alanine 19 to serine 515. Residues valine 31–phenylalanine 169 enclose the C-type lectin domain. Asparagine 47, asparagine 115, and asparagine 116 each carry an N-linked (GlcNAc...) asparagine glycan. 19 disulfides stabilise this stretch: cysteine 137–cysteine 158, cysteine 245–cysteine 256, cysteine 252–cysteine 265, cysteine 267–cysteine 280, cysteine 288–cysteine 296, cysteine 292–cysteine 308, cysteine 310–cysteine 323, cysteine 329–cysteine 340, cysteine 336–cysteine 349, cysteine 351–cysteine 362, cysteine 369–cysteine 378, cysteine 374–cysteine 388, cysteine 390–cysteine 404, cysteine 408–cysteine 413, cysteine 417–cysteine 425, cysteine 427–cysteine 439, cysteine 445–cysteine 455, cysteine 451–cysteine 464, and cysteine 466–cysteine 480. EGF-like domains follow at residues glycine 241–threonine 281 and alanine 284–glutamate 324. Residues aspartate 325–valine 363 form the EGF-like 3; calcium-binding domain. Asparagine 342 carries the (3R)-3-hydroxyasparagine modification. EGF-like domains follow at residues proline 365–glutamine 405 and cysteine 404–threonine 440. Residue asparagine 382 is glycosylated (N-linked (GlcNAc...) asparagine). Residue asparagine 409 is glycosylated (N-linked (GlcNAc...) asparagine). In terms of domain architecture, EGF-like 6; calcium-binding spans aspartate 441 to aspartate 481. Positions aspartate 481–serine 515 are involved in alpha-L/beta-2 and alpha-M/beta-2 integrin binding. The segment at lysine 484–threonine 506 is disordered. O-linked (Xyl...) (chondroitin sulfate) serine glycans are attached at residues serine 490 and serine 492. A helical membrane pass occupies residues glycine 516–leucine 539. At arginine 540 to leucine 575 the chain is on the cytoplasmic side.

In terms of assembly, interacts with ITGAL, ITGAM and ITGB2. Interacts with thrombin/F2; this interaction switches the specificity of thrombin from a procoagulant to an anticoagulant and antifibrinolytic protease. Interacts with ANGP1 and ANGP2; these interactions significantly inhibit the generation of activated PC and TAFIa/CPB2 by the thrombin/thrombomodulin complex. Interacts with PF4; this interaction enhances generation of activated protein C. Interacts with HMGB1; this interaction inhibits HMGB1 inflammatory activity. N-glycosylated. Post-translationally, the iron and 2-oxoglutarate dependent 3-hydroxylation of aspartate and asparagine is (R) stereospecific within EGF domains. As to expression, endothelial cells are unique in synthesizing thrombomodulin.

The protein resides in the membrane. Functionally, endothelial cell receptor that plays a critical role in regulating several physiological processes including hemostasis, coagulation, fibrinolysis, inflammation, and angiogenesis. Acts as a cofactor for thrombin activation of protein C/PROC on the surface of vascular endothelial cells leading to initiation of the activated protein C anticoagulant pathway. Also accelerates the activation of the plasma carboxypeptidase B2/CPB2, which catalyzes removal of C-terminal basic amino acids from its substrates including kinins or anaphylatoxins leading to fibrinolysis inhibition. Plays critical protective roles in changing the cleavage specificity of protease-activated receptor 1/PAR1, inhibiting endothelial cell permeability and inflammation. Suppresses inflammation distinctly from its anticoagulant cofactor activity by sequestering HMGB1 thereby preventing it from engaging cellular receptors such as RAGE and contributing to the inflammatory response. In Homo sapiens (Human), this protein is Thrombomodulin (THBD).